A 145-amino-acid chain; its full sequence is Peptide methionine sulfoxide reductase MsrB (145 aa).

Residues 6–129 (KNERLKQLTD…NSAALRFIPV (124 aa)) enclose the MsrB domain. Residue Cys-118 is the Nucleophile of the active site.

It belongs to the MsrB Met sulfoxide reductase family.

It catalyses the reaction L-methionyl-[protein] + [thioredoxin]-disulfide + H2O = L-methionyl-(R)-S-oxide-[protein] + [thioredoxin]-dithiol. This is Peptide methionine sulfoxide reductase MsrB from Listeria welshimeri serovar 6b (strain ATCC 35897 / DSM 20650 / CCUG 15529 / CIP 8149 / NCTC 11857 / SLCC 5334 / V8).